Here is a 311-residue protein sequence, read N- to C-terminus: Syndecan-1 (311 aa).

Residues 1 to 22 (MRRAALWLWLCALALRLQPALP) form the signal peptide. Over 23–255 (QIVAVNVPPE…SLLDRKEVLG (233 aa)) the chain is Extracellular. Disordered regions lie at residues 29 to 59 (VPPE…LSRQ) and 152 to 184 (SHPH…VEGG). Over residues 32-42 (EDQDGSGDDSD) the composition is skewed to acidic residues. Ser37 carries an O-linked (Xyl...) (chondroitin sulfate) serine glycan. The N-linked (GlcNAc...) asparagine glycan is linked to Asn43. O-linked (Xyl...) (heparan sulfate) serine glycosylation is found at Ser45 and Ser47. Ser207 and Ser217 each carry an O-linked (Xyl...) (chondroitin sulfate) serine glycan. The chain crosses the membrane as a helical span at residues 256 to 276 (GVIAGGLVGLIFAVCLVAFML). The Cytoplasmic portion of the chain corresponds to 277–311 (YRMKKKDEGSYSLEEPKQANGGAYQKPTKQEEFYA). Residues 285 to 311 (GSYSLEEPKQANGGAYQKPTKQEEFYA) form a disordered region. Position 286 is a phosphoserine (Ser286).

The protein belongs to the syndecan proteoglycan family. Interacts with CDCP1. Interacts (via C-terminus) with TIAM1 (via PDZ domain). Interacts with MDK. In terms of processing, shedding is enhanced by a number of factors such as heparanase, thrombin or EGF. Also by stress and wound healing. PMA-mediated shedding is inhibited by TIMP3.

It localises to the membrane. The protein localises to the secreted. It is found in the extracellular exosome. Cell surface proteoglycan that contains both heparan sulfate and chondroitin sulfate and that links the cytoskeleton to the interstitial matrix. Regulates exosome biogenesis in concert with SDCBP and PDCD6IP. Able to induce its own expression in dental mesenchymal cells and also in the neighboring dental epithelial cells via an MSX1-mediated pathway. The polypeptide is Syndecan-1 (Mus musculus (Mouse)).